The chain runs to 121 residues: Large ribosomal subunit protein bL12 (121 aa).

Belongs to the bacterial ribosomal protein bL12 family. In terms of assembly, homodimer. Part of the ribosomal stalk of the 50S ribosomal subunit. Forms a multimeric L10(L12)X complex, where L10 forms an elongated spine to which 2 to 4 L12 dimers bind in a sequential fashion. Binds GTP-bound translation factors.

In terms of biological role, forms part of the ribosomal stalk which helps the ribosome interact with GTP-bound translation factors. Is thus essential for accurate translation. This chain is Large ribosomal subunit protein bL12, found in Streptococcus uberis (strain ATCC BAA-854 / 0140J).